We begin with the raw amino-acid sequence, 32 residues long: MSDIN-like toxin proprotein 1 (32 aa).

The propeptide occupies 1 to 10; it reads MSDINVTRLP. Residues 11–18 constitute a cross-link (cyclopeptide (Gly-Pro)); sequence GFVPILFP. Residues 19-32 constitute a propeptide that is removed on maturation; that stretch reads CVGDDVNTALTRGE.

This sequence belongs to the MSDIN fungal toxin family. In terms of processing, processed by the macrocyclase-peptidase enzyme POPB to yield a toxic cyclic octapeptide. POPB first removes 10 residues from the N-terminus. Conformational trapping of the remaining peptide forces the enzyme to release this intermediate rather than proceed to macrocyclization. The enzyme rebinds the remaining peptide in a different conformation and catalyzes macrocyclization of the N-terminal 8 residues.

In terms of biological role, probable toxin that belongs to the MSDIN-like toxin family responsible for a large number of food poisoning cases and deaths. This chain is MSDIN-like toxin proprotein 1, found in Amanita bisporigera (Destroying angel).